The following is a 61-amino-acid chain: [Val1,Thr6]-bradykinyl-Val,Asp (61 aa).

The N-terminal stretch at 1–22 (MAFLKKSLFLVLFLGVVSLSFC) is a signal peptide. A propeptide spanning residues 23-48 (EEEEREEHEEEKREAEAAESAENLIS) is cleaved from the precursor. The segment at 27–61 (REEHEEEKREAEAAESAENLISKRVPPGFTPFRVD) is disordered.

As to expression, expressed by the skin glands. Expression levels in inguinal glands and granular glands are virtually the same.

Its subcellular location is the secreted. Functionally, induces contraction of rat ileum smooth muscle (EC(50)=2.73 uM) but has no activity towards rat smooth muscle from tail artery, urinary bladder or uterus. Binds to both bradykinin receptor B1 (BDKRB1) and B2 (BDKRB2); the effect via BDKRB1 is stronger. The chain is [Val1,Thr6]-bradykinyl-Val,Asp from Physalaemus nattereri (Cuyaba dwarf frog).